The chain runs to 297 residues: Cell division protein ZipA (297 aa).

Residue Met-1 is a topological domain, periplasmic. A helical membrane pass occupies residues 2 to 22 (EIGLREWLILIGIIVIAGILF). Residues 23 to 297 (DGWRRMRGGK…FERRALTQKR (275 aa)) lie on the Cytoplasmic side of the membrane. Residues 48-151 (DEEGGSAEVL…AAPASNSVKE (104 aa)) form a disordered region. Residues 83 to 92 (ARDREREPKP) are compositionally biased toward basic and acidic residues. Residues 124-133 (LFSDSDDDFA) are compositionally biased toward acidic residues.

It belongs to the ZipA family. In terms of assembly, interacts with FtsZ via their C-terminal domains.

The protein localises to the cell inner membrane. In terms of biological role, essential cell division protein that stabilizes the FtsZ protofilaments by cross-linking them and that serves as a cytoplasmic membrane anchor for the Z ring. Also required for the recruitment to the septal ring of downstream cell division proteins. In Pseudomonas putida (strain ATCC 47054 / DSM 6125 / CFBP 8728 / NCIMB 11950 / KT2440), this protein is Cell division protein ZipA.